The primary structure comprises 325 residues: Probable flavonol synthase 5 (325 aa).

The segment at 1 to 21 (MEEERDHNASESSLPSLSKQL) is disordered. Positions 10–21 (SESSLPSLSKQL) are enriched in polar residues. Residues 180-280 (TAEYVLRVNF…RISWPVFVAP (101 aa)) enclose the Fe2OG dioxygenase domain. Position 188 to 190 (188 to 190 (NFY)) interacts with 2-oxoglutarate. 3 residues coordinate Fe cation: H205, D207, and H261. 271-273 (RIS) serves as a coordination point for 2-oxoglutarate.

Belongs to the iron/ascorbate-dependent oxidoreductase family. Fe(2+) is required as a cofactor. Expressed in young seedlings.

It carries out the reaction a (2R,3R)-dihydroflavonol + 2-oxoglutarate + O2 = a flavonol + succinate + CO2 + H2O. It functions in the pathway secondary metabolite biosynthesis; flavonoid biosynthesis. The sequence is that of Probable flavonol synthase 5 (FLS5) from Arabidopsis thaliana (Mouse-ear cress).